Consider the following 199-residue polypeptide: Copper transport protein CTR4 (199 aa).

2 helical membrane-spanning segments follow: residues Lys-62–Ile-82 and Ala-152–Leu-172.

Belongs to the copper transporter (Ctr) (TC 1.A.56) family. SLC31A subfamily.

The protein localises to the membrane. In terms of biological role, required for high affinity copper (probably reduced Cu I) transport into the cell. Plays a role in fungal pathogenesis during host infection. This chain is Copper transport protein CTR4, found in Cryptococcus neoformans var. grubii serotype A (strain H99 / ATCC 208821 / CBS 10515 / FGSC 9487) (Filobasidiella neoformans var. grubii).